The following is a 500-amino-acid chain: Probable malate:quinone oxidoreductase (500 aa).

The protein belongs to the MQO family. It depends on FAD as a cofactor.

The catalysed reaction is (S)-malate + a quinone = a quinol + oxaloacetate. The protein operates within carbohydrate metabolism; tricarboxylic acid cycle; oxaloacetate from (S)-malate (quinone route): step 1/1. This is Probable malate:quinone oxidoreductase from Bacillus cereus (strain ATCC 10987 / NRS 248).